We begin with the raw amino-acid sequence, 175 residues long: Beta-carotene hydroxylase (175 aa).

Residues 11-136 form the Fatty acid hydroxylase domain; that stretch reads FVTVIGMEVI…RGKEGCVSFG (126 aa).

Belongs to the sterol desaturase family.

The catalysed reaction is all-trans-beta-carotene + 4 reduced [2Fe-2S]-[ferredoxin] + 2 O2 + 4 H(+) = all-trans-zeaxanthin + 4 oxidized [2Fe-2S]-[ferredoxin] + 2 H2O. The protein operates within carotenoid biosynthesis; zeaxanthin biosynthesis. Its function is as follows. Catalyzes the hydroxylation reaction from beta-carotene to zeaxanthin. This chain is Beta-carotene hydroxylase (crtZ), found in Pantoea ananas (Erwinia uredovora).